The following is a 559-amino-acid chain: Aminopeptidase Q (559 aa).

At 1-13 (MSRPFSSGVYVSR) the chain is on the cytoplasmic side. A helical; Signal-anchor for type II membrane protein transmembrane segment spans residues 14–34 (GVALLLAALTAVLLLVLVALA). Topologically, residues 35-559 (SLYGSCAHVQ…VPFRHFLAEH (525 aa)) are lumenal. Asparagine 121 and asparagine 129 each carry an N-linked (GlcNAc...) asparagine glycan. Glutamate 237 lines the substrate pocket. N-linked (GlcNAc...) asparagine glycosylation is found at asparagine 258, asparagine 285, and asparagine 343. Residue 376 to 380 (GAMEN) participates in substrate binding. Position 412 (histidine 412) interacts with Zn(2+). Glutamate 413 (proton acceptor) is an active-site residue. Residues histidine 416 and glutamate 435 each contribute to the Zn(2+) site.

Belongs to the peptidase M1 family. Homodimer. Zn(2+) is required as a cofactor. N-glycosylated.

It is found in the membrane. Its activity is regulated as follows. Inhibited by bestatin. Its function is as follows. Metalloprotease which may be important for placentation by regulating biological activity of key peptides at the embryo-maternal interface. On synthetic substrates it shows a marked preference for Leu-4-methylcoumaryl-7-amide (Leu-MCA) over Met-MCA, Arg-LCA and Lys-LCA. Cleaves the N-terminal amino acid of several peptides such as angiotensin-3, kisspeptin-10 and endokinin C. In Mus musculus (Mouse), this protein is Aminopeptidase Q.